A 1090-amino-acid chain; its full sequence is Leucine--tRNA ligase, cytoplasmic (1090 aa).

Residue serine 2 is modified to N-acetylserine. The 'HIGH' region signature appears at 66 to 76 (PYMNGVMHAGH). Position 142 is a phosphothreonine (threonine 142). The 'KMSKS' region signature appears at 729–733 (KMSKS). Residue lysine 732 participates in ATP binding.

The protein belongs to the class-I aminoacyl-tRNA synthetase family.

It localises to the cytoplasm. It carries out the reaction tRNA(Leu) + L-leucine + ATP = L-leucyl-tRNA(Leu) + AMP + diphosphate. This is Leucine--tRNA ligase, cytoplasmic (CDC60) from Saccharomyces cerevisiae (strain ATCC 204508 / S288c) (Baker's yeast).